The sequence spans 442 residues: D-serine dehydratase (442 aa).

Lys-118 is subject to N6-(pyridoxal phosphate)lysine.

It belongs to the serine/threonine dehydratase family. DsdA subfamily. As to quaternary structure, monomer. The cofactor is pyridoxal 5'-phosphate.

It catalyses the reaction D-serine = pyruvate + NH4(+). This Shigella flexneri serotype 5b (strain 8401) protein is D-serine dehydratase.